We begin with the raw amino-acid sequence, 638 residues long: MILFNRVGYFVSLFATVSCGCMTQLYKNTFFRGGDLAAIYTPDAQYCQKMCTFHPRCLLFSFLAVTPPKETNKRFGCFMKESITGTLPRIHRTGAISGHSLKQCGHQISACHRDIYKGLDMRGSNFNISKTDNIEECQKLCTNNFHCQFFTYATSAFYRPEYRKKCLLKHSASGTPTSIKSADNLVSGFSLKSCALSEIGCPMDIFQHSAFADLNVSQVITPDAFVCRTICTFHPNCLFFTFYTNEWETESQRNVCFLKTSKSGRPSPPIPQENAISGYSLLTCRKTRPEPCHSKIYSGVDFEGEELNVTFVQGADVCQETCTKTIRCQFFIYSLLPQDCKEEGCKCSLRLSTDGSPTRITYGMQGSSGYSLRLCKLVDSPDCTTKINARIVGGTNASLGEWPWQVSLQVKLVSQTHLCGGSIIGRQWVLTAAHCFDGIPYPDVWRIYGGILSLSEITKETPSSRIKELIIHQEYKVSEGNYDIALIKLQTPLNYTEFQKPICLPSKADTNTIYTNCWVTGWGYTKEQGETQNILQKATIPLVPNEECQKKYRDYVINKQMICAGYKEGGTDACKGDSGGPLVCKHSGRWQLVGITSWGEGCARKDQPGVYTKVSEYMDWILEKTQSSDVRALETSSA.

The N-terminal stretch at 1–19 (MILFNRVGYFVSLFATVSC) is a signal peptide. Apple domains are found at residues 21–104 (CMTQ…LKQC), 111–194 (CHRD…LKSC), 201–284 (CPMD…LLTC), and 292–375 (CHSK…LRLC). 18 disulfides stabilise this stretch: C21-C104, C47-C77, C51-C57, C111-C194, C137-C166, C141-C147, C201-C284, C227-C256, C231-C237, C292-C375, C318-C347, C322-C328, C340-C345, C383-C503, C419-C435, C517-C584, C548-C563, and C574-C602. N127 carries an N-linked (GlcNAc...) asparagine glycan. N-linked (GlcNAc...) asparagine glycosylation is present at N215. N-linked (GlcNAc...) asparagine glycosylation occurs at N308. A Peptidase S1 domain is found at 391–626 (IVGGTNASLG…YMDWILEKTQ (236 aa)). N-linked (GlcNAc...) asparagine glycosylation is present at N396. Catalysis depends on charge relay system residues H434 and D483. N494 carries N-linked (GlcNAc...) asparagine glycosylation. S578 serves as the catalytic Charge relay system.

This sequence belongs to the peptidase S1 family. Plasma kallikrein subfamily. Forms a heterodimer with SERPINA5. The zymogen is activated by factor XIIa, which cleaves the molecule into a light chain, which contains the active site, and a heavy chain, which associates with HMW kininogen. These chains are linked by one or more disulfide bonds.

The protein resides in the secreted. The enzyme catalyses Cleaves selectively Arg-|-Xaa and Lys-|-Xaa bonds, including Lys-|-Arg and Arg-|-Ser bonds in (human) kininogen to release bradykinin.. Its activity is regulated as follows. Inhibited by SERPINA5. The enzyme cleaves Lys-Arg and Arg-Ser bonds. It activates, in a reciprocal reaction, factor XII after its binding to a negatively charged surface. It also releases bradykinin from HMW kininogen and may also play a role in the renin-angiotensin system by converting prorenin into renin. The sequence is that of Plasma kallikrein (Klkb1) from Mus musculus (Mouse).